We begin with the raw amino-acid sequence, 577 residues long: Arginine--tRNA ligase (577 aa).

The 'HIGH' region motif lies at 122–132 (PNVAKEMHVGH).

Belongs to the class-I aminoacyl-tRNA synthetase family. As to quaternary structure, monomer.

The protein resides in the cytoplasm. The enzyme catalyses tRNA(Arg) + L-arginine + ATP = L-arginyl-tRNA(Arg) + AMP + diphosphate. The sequence is that of Arginine--tRNA ligase from Salmonella choleraesuis (strain SC-B67).